The sequence spans 700 residues: Elongation factor G 2 (700 aa).

The region spanning 8–290 is the tr-type G domain; the sequence is ERYRNIGISA…AVVDYLPSPI (283 aa). GTP-binding positions include 17–24, 88–92, and 142–145; these read AHIDAGKT, DTPGH, and NKMD.

This sequence belongs to the TRAFAC class translation factor GTPase superfamily. Classic translation factor GTPase family. EF-G/EF-2 subfamily.

Its subcellular location is the cytoplasm. Catalyzes the GTP-dependent ribosomal translocation step during translation elongation. During this step, the ribosome changes from the pre-translocational (PRE) to the post-translocational (POST) state as the newly formed A-site-bound peptidyl-tRNA and P-site-bound deacylated tRNA move to the P and E sites, respectively. Catalyzes the coordinated movement of the two tRNA molecules, the mRNA and conformational changes in the ribosome. This is Elongation factor G 2 (fusB) from Ralstonia nicotianae (strain ATCC BAA-1114 / GMI1000) (Ralstonia solanacearum).